We begin with the raw amino-acid sequence, 510 residues long: MFIESFRVESPHVRYGPMEIESEYRYDTTELVHEGKDGASRWVVRPKSVKYNFRTRTAVPKLGVMLVGWGGNNGSTLTAGVIANREGISWATKDKVQQANYYGSLTQASTIRVGSYNGEEIYAPFKSLLPMVNPDDIVFGGWDISNMNLADSMTRAKVLDIDLQKQLRPYMESMVPLPGIYDPDFIAANQGSRANSVIKGTKKEQVEQIIKDIREFKEKNKVDKIVVLWTANTERYSNVCAGLNDTMENLLASVDKNEAEVSPSTLYAIACVMEGVPFINGSPQNTFVPGLIDLAIKNNCLIGGDDFKSGQTKMKSVLVDFLVGAGIKPTSIVSYNHLGNNDGMNLSAPQAFRSKEISKSNVVDDMVSSNAILYEPGEHPDHVVVIKYVPYVGDSKRAMDEYTSEIFMGGKNTIVLHNTCEDSLLAAPIILDLVLLAELSTRIQLKAEGEDKFHSFHPVATILSYLTKAPLVPPGTPVVNALAKQRAMLENIMRACVGLAPENNMILEYK.

NAD(+)-binding residues include glycine 70, glycine 71, asparagine 72, asparagine 73, aspartate 143, isoleucine 180, glutamine 190, arginine 193, threonine 230, alanine 231, asparagine 232, threonine 233, glycine 281, serine 282, aspartate 306, serine 309, asparagine 340, asparagine 341, aspartate 342, lysine 355, glycine 393, aspartate 394, aspartate 422, and serine 423.

Belongs to the myo-inositol 1-phosphate synthase family. Requires NAD(+) as cofactor.

The protein resides in the cytoplasm. It localises to the cytosol. Its subcellular location is the nucleus. The catalysed reaction is D-glucose 6-phosphate = 1D-myo-inositol 3-phosphate. The protein operates within polyol metabolism; myo-inositol biosynthesis; myo-inositol from D-glucose 6-phosphate: step 1/2. Its function is as follows. Key enzyme in myo-inositol biosynthesis pathway that catalyzes the conversion of glucose 6-phosphate to 1-myo-inositol 1-phosphate in a NAD-dependent manner. This is Inositol-3-phosphate synthase from Zea mays (Maize).